The chain runs to 94 residues: Pyrimidine/purine nucleoside phosphorylase (94 aa).

This sequence belongs to the nucleoside phosphorylase PpnP family.

The catalysed reaction is a purine D-ribonucleoside + phosphate = a purine nucleobase + alpha-D-ribose 1-phosphate. It catalyses the reaction adenosine + phosphate = alpha-D-ribose 1-phosphate + adenine. It carries out the reaction cytidine + phosphate = cytosine + alpha-D-ribose 1-phosphate. The enzyme catalyses guanosine + phosphate = alpha-D-ribose 1-phosphate + guanine. The catalysed reaction is inosine + phosphate = alpha-D-ribose 1-phosphate + hypoxanthine. It catalyses the reaction thymidine + phosphate = 2-deoxy-alpha-D-ribose 1-phosphate + thymine. It carries out the reaction uridine + phosphate = alpha-D-ribose 1-phosphate + uracil. The enzyme catalyses xanthosine + phosphate = alpha-D-ribose 1-phosphate + xanthine. Catalyzes the phosphorolysis of diverse nucleosides, yielding D-ribose 1-phosphate and the respective free bases. Can use uridine, adenosine, guanosine, cytidine, thymidine, inosine and xanthosine as substrates. Also catalyzes the reverse reactions. This Salmonella arizonae (strain ATCC BAA-731 / CDC346-86 / RSK2980) protein is Pyrimidine/purine nucleoside phosphorylase.